A 979-amino-acid polypeptide reads, in one-letter code: Calsyntenin-1 (979 aa).

The signal sequence occupies residues methionine 1 to alanine 28. At alanine 29–threonine 859 the chain is on the extracellular side. Cadherin domains lie at leucine 38–phenylalanine 164 and lysine 165–tryptophan 265. N-linked (GlcNAc...) asparagine glycans are attached at residues asparagine 346, asparagine 366, and asparagine 515. The chain crosses the membrane as a helical span at residues alanine 860 to phenylalanine 880. Over arginine 881–tyrosine 979 the chain is Cytoplasmic. Residues methionine 915–tyrosine 979 form a disordered region. A compositionally biased stretch (acidic residues) spans glutamate 925–glycine 959.

This sequence belongs to the calsyntenin family. Directly interacts with APBA2. Forms a tripartite complex with APBA2 and APP. The CTF1 chain interacts with PSEN1. Interacts with KLC1 and APBB1. In terms of assembly, interacts with APBB1; this interaction stabilizes AlcICD metabolism. As to quaternary structure, interacts with PSEN1. Post-translationally, proteolytically processed under normal cellular conditions. A primary zeta-cleavage generates a large extracellular (soluble) N-terminal domain (sAlc) and a short C-terminal transmembrane fragment (CTF1). A secondary cleavage catalyzed by presenilin gamma-secretase within the transmembrane domain releases the beta-Alc-alpha chain in the extracellular milieu and produces an intracellular fragment (AlcICD). Beta-Alc-alpha secretion is largely dependent upon PSEN1 and PSEN2. This processing is strongly suppressed in the tripartite complex formed with APBA2 and APP, which seems to prevent the association with PSEN1. Highly expressed in the brain (at protein level), with over 90% of the neurons expressing detectable amounts. In the brain, relatively high levels in the cerebral cortex, striatum, hippocampus and thalamus. Moderate levels in the cerebellum. Low levels in the olfactory bulb, midbrain and pons (at protein level). Not detected in Purkinje cells. Expressed at low levels in the lung (at protein level). At the mRNA level, weakly detected in the kidney, lung, skeletal muscle, heart and testis. Not expressed in the sciatic nerve fiber.

It localises to the postsynaptic cell membrane. Its subcellular location is the endoplasmic reticulum membrane. The protein resides in the golgi apparatus membrane. It is found in the cell projection. The protein localises to the neuron projection. It localises to the vesicle. Its subcellular location is the nucleus. In terms of biological role, postsynaptic adhesion molecule that binds to presynaptic neurexins to mediate both excitatory and inhibitory synapse formation. Promotes synapse development by acting as a cell adhesion molecule at the postsynaptic membrane, which associates with neurexin-alpha at the presynaptic membrane. Also functions as a cargo in axonal anterograde transport by acting as a molecular adapter that promotes KLC1 association with vesicles. Complex formation with APBA2 and APP, stabilizes APP metabolism and enhances APBA2-mediated suppression of beta-APP40 secretion, due to the retardation of intracellular APP maturation. As intracellular fragment AlcICD, suppresses APBB1-dependent transactivation stimulated by APP C-terminal intracellular fragment (AICD), most probably by competing with AICD for APBB1-binding. Its function is as follows. In complex with APBA2 and C99, a C-terminal APP fragment, abolishes C99 interaction with PSEN1 and thus APP C99 cleavage by gamma-secretase, most probably through stabilization of the direct interaction between APBA2 and APP. The protein is Calsyntenin-1 of Mus musculus (Mouse).